A 123-amino-acid polypeptide reads, in one-letter code: UPF0231 protein PMI2039 (123 aa).

The protein belongs to the UPF0231 family.

The polypeptide is UPF0231 protein PMI2039 (Proteus mirabilis (strain HI4320)).